We begin with the raw amino-acid sequence, 390 residues long: Histamine H4 receptor (390 aa).

The Extracellular portion of the chain corresponds to 1–19 (MPDTNSTINLSLSTRVTLA). 2 N-linked (GlcNAc...) asparagine glycosylation sites follow: Asn-5 and Asn-9. Residues 20-40 (FFMSLVAFAIMLGNALVILAF) form a helical membrane-spanning segment. Topologically, residues 41–52 (VVDKNLRHRSSY) are cytoplasmic. Residues 53–73 (FFLNLAISDFFVGVISIPLYI) traverse the membrane as a helical segment. Residues 74–87 (PHTLFEWDFGKEIC) lie on the Extracellular side of the membrane. Cysteines 87 and 164 form a disulfide. Residues 88–108 (VFWLTTDYLLCTASVYNIVLI) form a helical membrane-spanning segment. Residues 109–131 (SYDRYLSVSNAVSYRTQHTGVLK) lie on the Cytoplasmic side of the membrane. The helical transmembrane segment at 132–152 (IVTLMVAVWVLAFLVNGPMIL) threads the bilayer. The Extracellular segment spans residues 153–172 (VSESWKDEGSECEPGFFSEW). A helical membrane pass occupies residues 173 to 193 (YILAITSFLEFVIPVILVAYF). Residues 194-304 (NMNIYWSLWK…LLRARRLAKS (111 aa)) lie on the Cytoplasmic side of the membrane. The helical transmembrane segment at 305-325 (LAILLGVFAVCWAPYSLFTIV) threads the bilayer. Topologically, residues 326–341 (LSFYSSATGPKSVWYR) are extracellular. The helical transmembrane segment at 342–362 (IAFWLQWFNSFVNPLLYPLCH) threads the bilayer. Topologically, residues 363–390 (KRFQKAFLKIFCIKKQPLPSQHSRSVSS) are cytoplasmic.

It belongs to the G-protein coupled receptor 1 family. In terms of assembly, interacts with TSPAN4. In terms of tissue distribution, expressed primarily in the bone marrow and eosinophils. Shows preferential distribution in cells of immunological relevance such as T-cells, dendritic cells, monocytes, mast cells, neutrophils. Also expressed in a wide variety of peripheral tissues, including the heart, kidney, liver, lung, pancreas, skeletal muscle, prostate, small intestine, spleen, testis, colon, fetal liver and lymph node.

Its subcellular location is the cell membrane. In terms of biological role, the H4 subclass of histamine receptors could mediate the histamine signals in peripheral tissues. Displays a significant level of constitutive activity (spontaneous activity in the absence of agonist). The protein is Histamine H4 receptor (HRH4) of Homo sapiens (Human).